A 91-amino-acid chain; its full sequence is Putative regulatory protein Cyan7425_4125 (91 aa).

Belongs to the RemA family.

This chain is Putative regulatory protein Cyan7425_4125, found in Cyanothece sp. (strain PCC 7425 / ATCC 29141).